Reading from the N-terminus, the 89-residue chain is Small ribosomal subunit protein uS17 (89 aa).

This sequence belongs to the universal ribosomal protein uS17 family. In terms of assembly, part of the 30S ribosomal subunit.

Its function is as follows. One of the primary rRNA binding proteins, it binds specifically to the 5'-end of 16S ribosomal RNA. In Aromatoleum aromaticum (strain DSM 19018 / LMG 30748 / EbN1) (Azoarcus sp. (strain EbN1)), this protein is Small ribosomal subunit protein uS17.